Consider the following 491-residue polypeptide: Lysosomal Pro-X carboxypeptidase (491 aa).

A signal peptide spans 1–17 (MGCRALLLLSFLLLGAA). A propeptide spanning residues 18–43 (TTIPPRLKTLGSPHLSASPTPDPAVA) is cleaved from the precursor. Asn-99 carries N-linked (GlcNAc...) asparagine glycosylation. Ser-177 acts as the Charge relay system in catalysis. Residues 192-332 (HIVVGALAAS…QNIFQALSVY (141 aa)) form an SKS domain region. 4 cysteine pairs are disulfide-bonded: Cys-213–Cys-370, Cys-231–Cys-308, Cys-262–Cys-341, and Cys-362–Cys-392. N-linked (GlcNAc...) asparagine glycans are attached at residues Asn-315, Asn-334, and Asn-343. The N-linked (GlcNAc...) asparagine glycan is linked to Asn-413. Active-site charge relay system residues include Asp-428 and His-453.

It belongs to the peptidase S28 family. Homodimer.

It localises to the lysosome. The enzyme catalyses Cleavage of a -Pro-|-Xaa bond to release a C-terminal amino acid.. Functionally, cleaves C-terminal amino acids linked to proline in peptides such as angiotensin II, III and des-Arg9-bradykinin. This cleavage occurs at acidic pH, but enzymatic activity is retained with some substrates at neutral pH. The polypeptide is Lysosomal Pro-X carboxypeptidase (Prcp) (Mus musculus (Mouse)).